Reading from the N-terminus, the 762-residue chain is Polyribonucleotide nucleotidyltransferase (762 aa).

Residues Asp-531 and Asp-537 each coordinate Mg(2+). The 60-residue stretch at 597–656 (PRVTTIKVPVDKIGEVIGPKGKVINSITEETRAQISIEDDGTVFVGATDGPSAQAAIDKI) folds into the KH domain. Residues 668–737 (GERFLGTVVK…KRGKISLVLV (70 aa)) form the S1 motif domain.

The protein belongs to the polyribonucleotide nucleotidyltransferase family. Mg(2+) serves as cofactor.

It is found in the cytoplasm. It carries out the reaction RNA(n+1) + phosphate = RNA(n) + a ribonucleoside 5'-diphosphate. In terms of biological role, involved in mRNA degradation. Catalyzes the phosphorolysis of single-stranded polyribonucleotides processively in the 3'- to 5'-direction. The sequence is that of Polyribonucleotide nucleotidyltransferase from Mycobacterium ulcerans (strain Agy99).